The sequence spans 158 residues: SsrA-binding protein (158 aa).

The disordered stretch occupies residues 133–158; the sequence is QLHDKRETEKKRDWNKEKGRLLRDKH.

This sequence belongs to the SmpB family.

The protein localises to the cytoplasm. Functionally, required for rescue of stalled ribosomes mediated by trans-translation. Binds to transfer-messenger RNA (tmRNA), required for stable association of tmRNA with ribosomes. tmRNA and SmpB together mimic tRNA shape, replacing the anticodon stem-loop with SmpB. tmRNA is encoded by the ssrA gene; the 2 termini fold to resemble tRNA(Ala) and it encodes a 'tag peptide', a short internal open reading frame. During trans-translation Ala-aminoacylated tmRNA acts like a tRNA, entering the A-site of stalled ribosomes, displacing the stalled mRNA. The ribosome then switches to translate the ORF on the tmRNA; the nascent peptide is terminated with the 'tag peptide' encoded by the tmRNA and targeted for degradation. The ribosome is freed to recommence translation, which seems to be the essential function of trans-translation. The protein is SsrA-binding protein of Beijerinckia indica subsp. indica (strain ATCC 9039 / DSM 1715 / NCIMB 8712).